Reading from the N-terminus, the 469-residue chain is Glutamate--tRNA ligase (469 aa).

Residues 11 to 21 (PSPTGFIHLGN) carry the 'HIGH' region motif. A compositionally biased stretch (basic and acidic residues) spans 118-131 (GEKPRYDGTWRPEP). Residues 118–139 (GEKPRYDGTWRPEPGKVLPEPP) are disordered. The short motif at 243–247 (KMSKR) is the 'KMSKS' region element. Position 246 (Lys-246) interacts with ATP.

The protein belongs to the class-I aminoacyl-tRNA synthetase family. Glutamate--tRNA ligase type 1 subfamily. Monomer.

The protein resides in the cytoplasm. It catalyses the reaction tRNA(Glu) + L-glutamate + ATP = L-glutamyl-tRNA(Glu) + AMP + diphosphate. Its function is as follows. Catalyzes the attachment of glutamate to tRNA(Glu) in a two-step reaction: glutamate is first activated by ATP to form Glu-AMP and then transferred to the acceptor end of tRNA(Glu). This Burkholderia pseudomallei (strain 668) protein is Glutamate--tRNA ligase.